A 143-amino-acid polypeptide reads, in one-letter code: Large ribosomal subunit protein uL16c (143 aa).

It belongs to the universal ribosomal protein uL16 family. In terms of assembly, part of the 50S ribosomal subunit.

The protein resides in the plastid. Its subcellular location is the chloroplast. This chain is Large ribosomal subunit protein uL16c, found in Spirogyra maxima (Green alga).